Reading from the N-terminus, the 785-residue chain is Arrestin domain-containing protein D (785 aa).

5 disordered regions span residues 29 to 69 (QNES…SKYP), 172 to 205 (ILLPTTTSTQNSTLSPTLLSSNLNSKSSTTTTTT), 326 to 367 (SNNS…ITNN), 435 to 486 (SNSN…SDHN), and 608 to 642 (YSSSGSGSGSGSSNSNSNHSSSNYLNEQEENLDEQ). Residues 173-205 (LLPTTTSTQNSTLSPTLLSSNLNSKSSTTTTTT) are compositionally biased toward low complexity. A compositionally biased stretch (low complexity) spans 435–450 (SNSNSSSSGGSSNKNN). Residues 466–478 (SNKKSSGSHRYHY) are compositionally biased toward basic residues. A compositionally biased stretch (low complexity) spans 608 to 633 (YSSSGSGSGSGSSNSNSNHSSSNYLN). The FYVE-type zinc-finger motif lies at 682–742 (ESSITNCNLC…ICLMCFDAVK (61 aa)). Positions 688, 691, 704, 707, 712, 715, 734, and 737 each coordinate Zn(2+). Residues 688-738 (CNLCDNTFTIIRRTHHCRACGGVFCEACSNQKVCLYGFGVNNKVRICLMCF) form an RING-type; degenerate zinc finger.

This sequence belongs to the arrestin family.

The sequence is that of Arrestin domain-containing protein D (adcD) from Dictyostelium discoideum (Social amoeba).